A 486-amino-acid chain; its full sequence is Arginine/agmatine antiporter (486 aa).

Transmembrane regions (helical) follow at residues 12–32 (LGAI…GIFS), 41–61 (AGVG…FFIA), 85–105 (GFGP…QIFG), 132–152 (PAIL…LKGI), 160–180 (IIGT…TAFL), 211–231 (STML…VMSA), 242–262 (ATIL…ILPF), 296–316 (VGLL…VAEI), 341–361 (VSLY…YFST), 367–387 (MLSI…AFLV), 418–438 (IWLI…LLAL), and 461–481 (EVTE…LFST).

The protein belongs to the amino acid-polyamine-organocation (APC) superfamily. Basic amino acid/polyamine antiporter (APA) (TC 2.A.3.2) family.

It localises to the cell inner membrane. Catalyzes the exchange of L-arginine for agmatine. The arginine uptake by the bacterium in the macrophage may be a virulence factor against the host innate immune response. The sequence is that of Arginine/agmatine antiporter (aaxC) from Chlamydia abortus (strain DSM 27085 / S26/3) (Chlamydophila abortus).